The sequence spans 286 residues: Secretory carrier-associated membrane protein 2 (286 aa).

Composition is skewed to basic and acidic residues over residues 1–10 (MAGRYDRNPF) and 54–63 (STKDMKKKEK). The tract at residues 1 to 63 (MAGRYDRNPF…STKDMKKKEK (63 aa)) is disordered. At 1 to 126 (MAGRYDRNPF…LQRMQYLAFS (126 aa)) the chain is on the cytoplasmic side. A coiled-coil region spans residues 52-89 (LDSTKDMKKKEKELQAKEAELNKRESELRRREEAASRA). 4 helical membrane passes run 127–147 (SLLG…AAWI), 152–172 (VMIW…AYVL), 189–209 (FGWF…SAVA), and 237–257 (IFYF…VVVI). Residues 258-286 (QQVYMYFRGSGKAAEMKREAARGAMRSAF) lie on the Cytoplasmic side of the membrane.

This sequence belongs to the SCAMP family.

The protein resides in the cell membrane. It is found in the cytoplasmic vesicle. The protein localises to the secretory vesicle membrane. Functionally, probably involved in membrane trafficking. The polypeptide is Secretory carrier-associated membrane protein 2 (SCAMP2) (Oryza sativa subsp. japonica (Rice)).